Reading from the N-terminus, the 188-residue chain is UPF0301 protein Smal_0940 (188 aa).

The protein belongs to the UPF0301 (AlgH) family.

In Stenotrophomonas maltophilia (strain R551-3), this protein is UPF0301 protein Smal_0940.